A 464-amino-acid polypeptide reads, in one-letter code: Glycine--tRNA ligase (464 aa).

Substrate-binding residues include Arg104 and Glu175. ATP contacts are provided by residues 207–209, 217–222, 292–293, and 336–339; these read RNE, FRTREF, EL, and GVNR. Residue 222-226 coordinates substrate; sequence FEQME. 332–336 lines the substrate pocket; the sequence is EPALG.

This sequence belongs to the class-II aminoacyl-tRNA synthetase family. As to quaternary structure, homodimer.

Its subcellular location is the cytoplasm. The catalysed reaction is tRNA(Gly) + glycine + ATP = glycyl-tRNA(Gly) + AMP + diphosphate. In terms of biological role, catalyzes the attachment of glycine to tRNA(Gly). The polypeptide is Glycine--tRNA ligase (Leptospira interrogans serogroup Icterohaemorrhagiae serovar copenhageni (strain Fiocruz L1-130)).